Consider the following 239-residue polypeptide: Ribosomal RNA small subunit methyltransferase G (239 aa).

Residues G80, F85, 103–105, 131–132, and R150 contribute to the S-adenosyl-L-methionine site; these read EAS and AE.

This sequence belongs to the methyltransferase superfamily. RNA methyltransferase RsmG family.

It is found in the cytoplasm. In terms of biological role, specifically methylates the N7 position of a guanine in 16S rRNA. In Caldanaerobacter subterraneus subsp. tengcongensis (strain DSM 15242 / JCM 11007 / NBRC 100824 / MB4) (Thermoanaerobacter tengcongensis), this protein is Ribosomal RNA small subunit methyltransferase G.